We begin with the raw amino-acid sequence, 285 residues long: ATP synthase gamma chain (285 aa).

It belongs to the ATPase gamma chain family. F-type ATPases have 2 components, CF(1) - the catalytic core - and CF(0) - the membrane proton channel. CF(1) has five subunits: alpha(3), beta(3), gamma(1), delta(1), epsilon(1). CF(0) has three main subunits: a, b and c.

The protein localises to the cell membrane. Produces ATP from ADP in the presence of a proton gradient across the membrane. The gamma chain is believed to be important in regulating ATPase activity and the flow of protons through the CF(0) complex. In Clostridium novyi (strain NT), this protein is ATP synthase gamma chain.